A 233-amino-acid chain; its full sequence is Orotidine 5'-phosphate decarboxylase (233 aa).

Residues Asp-11, Lys-33, 60 to 69 (DLKFHDIPNT), Thr-120, Arg-181, Gln-190, Gly-210, and Arg-211 contribute to the substrate site. Lys-62 acts as the Proton donor in catalysis.

This sequence belongs to the OMP decarboxylase family. Type 1 subfamily. Homodimer.

It catalyses the reaction orotidine 5'-phosphate + H(+) = UMP + CO2. The protein operates within pyrimidine metabolism; UMP biosynthesis via de novo pathway; UMP from orotate: step 2/2. In terms of biological role, catalyzes the decarboxylation of orotidine 5'-monophosphate (OMP) to uridine 5'-monophosphate (UMP). The chain is Orotidine 5'-phosphate decarboxylase from Vibrio parahaemolyticus serotype O3:K6 (strain RIMD 2210633).